A 491-amino-acid polypeptide reads, in one-letter code: Probable glycine dehydrogenase (decarboxylating) subunit 2 (491 aa).

Lys-273 is subject to N6-(pyridoxal phosphate)lysine.

The protein belongs to the GcvP family. C-terminal subunit subfamily. As to quaternary structure, the glycine cleavage system is composed of four proteins: P, T, L and H. In this organism, the P 'protein' is a heterodimer of two subunits. It depends on pyridoxal 5'-phosphate as a cofactor.

It catalyses the reaction N(6)-[(R)-lipoyl]-L-lysyl-[glycine-cleavage complex H protein] + glycine + H(+) = N(6)-[(R)-S(8)-aminomethyldihydrolipoyl]-L-lysyl-[glycine-cleavage complex H protein] + CO2. Its function is as follows. The glycine cleavage system catalyzes the degradation of glycine. The P protein binds the alpha-amino group of glycine through its pyridoxal phosphate cofactor; CO(2) is released and the remaining methylamine moiety is then transferred to the lipoamide cofactor of the H protein. This Bacillus thuringiensis (strain Al Hakam) protein is Probable glycine dehydrogenase (decarboxylating) subunit 2.